The following is a 299-amino-acid chain: Taste receptor type 2 member 5 (299 aa).

A topological domain (extracellular) is located at residue methionine 1. The helical transmembrane segment at 2 to 22 (LSAGLGLLMLVAVIEFLIGLI) threads the bilayer. The Cytoplasmic segment spans residues 23–45 (GNGILVVWSLREWIRKFSWSSYN). Residues 46–66 (LIILGLAGCRFLLQWLIILDL) traverse the membrane as a helical segment. Over 67 to 82 (SLFPLFQSSSWLRYLN) the chain is Extracellular. A helical membrane pass occupies residues 83–103 (VFWVLVSQASLWFATFLSVFY). The Cytoplasmic portion of the chain corresponds to 104–127 (CKKITTFDRPAYLWLKQRAYNLSL). A helical membrane pass occupies residues 128–148 (WCLLGYFIISLLLTVQVGLTV). At 149-175 (HHPPQGNSSIRYPFEHWQYLYVFQLNS) the chain is on the extracellular side. The N-linked (GlcNAc...) asparagine glycan is linked to asparagine 155. A helical transmembrane segment spans residues 176 to 196 (GSYLPLMVFLVSSGMLIISLY). The Cytoplasmic segment spans residues 197–223 (THHKKMKVHSAGRRDARAKAHITALKS). The chain crosses the membrane as a helical span at residues 224–244 (LGCFLLLHLVYIVASPFSITS). Over 245 to 253 (KTYPPDLTS) the chain is Extracellular. The helical transmembrane segment at 254-274 (VFIWETLMAAYPSLHSLMLIM) threads the bilayer. Residues 275–299 (GIPRVKQTCQKILWKTVCARRCWGP) are Cytoplasmic-facing.

The protein belongs to the G-protein coupled receptor T2R family.

The protein resides in the membrane. Its function is as follows. Receptor that may play a role in the perception of bitterness and is gustducin-linked. May play a role in sensing the chemical composition of the gastrointestinal content. The activity of this receptor may stimulate alpha gustducin, mediate PLC-beta-2 activation and lead to the gating of TRPM5. This chain is Taste receptor type 2 member 5 (TAS2R5), found in Papio hamadryas (Hamadryas baboon).